Here is a 349-residue protein sequence, read N- to C-terminus: tRNA pseudouridine synthase D (349 aa).

Substrate is bound at residue Phe-27. Residue Asp-80 is the Nucleophile of the active site. Residue Asn-129 coordinates substrate. The TRUD domain maps to 155-303; that stretch reads GVPNYFGAQR…VEAARRAMLL (149 aa). A substrate-binding site is contributed by Phe-329.

The protein belongs to the pseudouridine synthase TruD family.

It catalyses the reaction uridine(13) in tRNA = pseudouridine(13) in tRNA. Functionally, responsible for synthesis of pseudouridine from uracil-13 in transfer RNAs. The chain is tRNA pseudouridine synthase D from Enterobacter sp. (strain 638).